A 224-amino-acid chain; its full sequence is Flagellar L-ring protein (224 aa).

Positions 1–15 (MARYFILAAALLLTA) are cleaved as a signal peptide. C16 carries N-palmitoyl cysteine lipidation. Residue C16 is the site of S-diacylglycerol cysteine attachment.

Belongs to the FlgH family. As to quaternary structure, the basal body constitutes a major portion of the flagellar organelle and consists of four rings (L,P,S, and M) mounted on a central rod.

It localises to the cell outer membrane. Its subcellular location is the bacterial flagellum basal body. In terms of biological role, assembles around the rod to form the L-ring and probably protects the motor/basal body from shearing forces during rotation. In Shewanella sp. (strain MR-4), this protein is Flagellar L-ring protein.